A 156-amino-acid chain; its full sequence is Protein-export protein SecB (156 aa).

It belongs to the SecB family. As to quaternary structure, homotetramer, a dimer of dimers. One homotetramer interacts with 1 SecA dimer.

It localises to the cytoplasm. Functionally, one of the proteins required for the normal export of preproteins out of the cell cytoplasm. It is a molecular chaperone that binds to a subset of precursor proteins, maintaining them in a translocation-competent state. It also specifically binds to its receptor SecA. The sequence is that of Protein-export protein SecB from Serratia proteamaculans (strain 568).